The following is a 490-amino-acid chain: GTPase Der (490 aa).

EngA-type G domains follow at residues 3-166 and 203-376; these read PVVA…MEDL and IKLA…DSST. GTP-binding positions include 9–16, 56–60, 118–121, 209–216, 256–260, and 321–324; these read GRPNVGKS, DTGGI, NKTD, DTAGV, and NKWD. Residues 377–461 enclose the KH-like domain; the sequence is RRVGTSMLTR…PIRIQFKEGE (85 aa).

The protein belongs to the TRAFAC class TrmE-Era-EngA-EngB-Septin-like GTPase superfamily. EngA (Der) GTPase family. Associates with the 50S ribosomal subunit.

GTPase that plays an essential role in the late steps of ribosome biogenesis. The polypeptide is GTPase Der (Escherichia coli O157:H7).